The primary structure comprises 1339 residues: Tuberous sclerosis 2 protein homolog (1339 aa).

The residue at position 1036 (S1036) is a Phosphoserine. Positions 1109 to 1303 (ILANTNPSED…AERLRQLKRL (195 aa)) constitute a Rap-GAP domain.

As to quaternary structure, interacts with tsc1.

The protein localises to the cytoplasm. Its subcellular location is the nucleus. Its function is as follows. Together with tsc1, required for uptake of various amino acids from the environment and for proper conjugation. Involved in induction of gene expression of permeases and genes required for meiosis upon nitrogen starvation. May act as a GTPase-activating protein (GAP) for the small GTPase rhb1. The sequence is that of Tuberous sclerosis 2 protein homolog (tsc2) from Schizosaccharomyces pombe (strain 972 / ATCC 24843) (Fission yeast).